The primary structure comprises 271 residues: Tryptophan synthase alpha chain (271 aa).

Residues E47 and D58 each act as proton acceptor in the active site.

This sequence belongs to the TrpA family. In terms of assembly, tetramer of two alpha and two beta chains.

The enzyme catalyses (1S,2R)-1-C-(indol-3-yl)glycerol 3-phosphate + L-serine = D-glyceraldehyde 3-phosphate + L-tryptophan + H2O. Its pathway is amino-acid biosynthesis; L-tryptophan biosynthesis; L-tryptophan from chorismate: step 5/5. The alpha subunit is responsible for the aldol cleavage of indoleglycerol phosphate to indole and glyceraldehyde 3-phosphate. The polypeptide is Tryptophan synthase alpha chain (Thermus thermophilus (strain ATCC BAA-163 / DSM 7039 / HB27)).